A 325-amino-acid chain; its full sequence is Protease HtpX homolog (325 aa).

A helical membrane pass occupies residues 20 to 40 (IGYLLGGGGGMMIALVIAVAM). His-130 contributes to the Zn(2+) binding site. Residue Glu-131 is part of the active site. His-134 provides a ligand contact to Zn(2+). A run of 2 helical transmembrane segments spans residues 145–165 (IVAT…FLGG) and 173–193 (VMGV…AMIV). Glu-202 contributes to the Zn(2+) binding site. The tract at residues 288–325 (AMTARAAAPSQNSGPWGQRSDNAGGNSNGGSRYRGPWS) is disordered. Residues 306 to 325 (RSDNAGGNSNGGSRYRGPWS) are compositionally biased toward low complexity.

Belongs to the peptidase M48B family. The cofactor is Zn(2+).

It is found in the cell inner membrane. The protein is Protease HtpX homolog of Brucella abortus (strain S19).